Here is a 750-residue protein sequence, read N- to C-terminus: MLGRLKDQLNMTLAQGQEEAKNRRRQFQEEDQLRRNNKSSNKLSQNEEDAKNMDSVVQKLNELQNNVVAFQKLLQEKTPLSSIQDLEGFREFMENLEHRYEMTVSEVRRLSHEVNDLQTDRENLKHQFEDQIEKLNSEISNQNSLILQKKDELEKSIQRCSELEEKINSLESAQSIEQEVISSLKDDKTVETKNDVPEVSRPSTDTIGVSSALSKKKKKRNRKNQKKKSTKQNIEATTENDALSESISTPDIQKVAQSEDVDAEQDTVADSKEEERRDIANDDLIVNANAKEPMHHFSFTDLDTLLNWPKYVFHHHKIHLADTIPLVFLDLKPKEYTVDLETPKLVEELTKQLHVAESTLKENSEKFKQNSESLKSRVDNLNDYITKLQNEIDECRRNLLWAESSCETIREENQKNIKKLNDAESLKSRLLQSRTQMQTELDSYITSNSQLKDEITSLKQTVSESEAERKRLFSSAQEKQLQMKETVNKLTSLQEQNNEFDRQLKEQEEDLQNKEEELTELRKLLREQTQDSQKLRLLVEQLELERQDLKQAGENHYSNLSSDYETQIKSLESSLTNSQAECVSFQEKINELNSQIDELKLKLNEANKKYQELAISFENSNVKTQSVEPDNGLSLEALKNENQTLLKNLEDSTARYEHLQKSFKNVFNQLRKQQPSNHGRNSSVSRSSSSVEVNSKHPGSDDMLIDKEYTRNILFQFLEQRDRRPEIVNLLSILLDLSEEQKQKLLSVKY.

Disordered stretches follow at residues 14-53 and 188-280; these read AQGQ…AKNM and KTVE…RDIA. 2 stretches are compositionally biased toward basic and acidic residues: residues 18-34 and 188-198; these read EEAK…DQLR and KTVETKNDVPE. Residues 28–182 are a coiled coil; that stretch reads QEEDQLRRNN…AQSIEQEVIS (155 aa). Residues 201–213 are compositionally biased toward polar residues; the sequence is RPSTDTIGVSSAL. A coiled-coil region spans residues 213–243; the sequence is LSKKKKKRNRKNQKKKSTKQNIEATTENDAL. Basic residues predominate over residues 214–230; sequence SKKKKKRNRKNQKKKST. Residues 233-251 show a composition bias toward polar residues; the sequence is NIEATTENDALSESISTPD. Residues 269-280 are compositionally biased toward basic and acidic residues; it reads ADSKEEERRDIA. Residues 344–665 are a coiled coil; it reads KLVEELTKQL…YEHLQKSFKN (322 aa). A disordered region spans residues 672-703; the sequence is KQQPSNHGRNSSVSRSSSSVEVNSKHPGSDDM. Residues 676-693 show a composition bias toward low complexity; that stretch reads SNHGRNSSVSRSSSSVEV. The segment covering 694–703 has biased composition (basic and acidic residues); it reads NSKHPGSDDM. The GRIP domain occupies 700 to 748; sequence SDDMLIDKEYTRNILFQFLEQRDRRPEIVNLLSILLDLSEEQKQKLLSV.

It localises to the cytoplasm. This is GRIP and coiled-coil domain-containing protein C27D7.02c from Schizosaccharomyces pombe (strain 972 / ATCC 24843) (Fission yeast).